The sequence spans 321 residues: tRNA 2-thiolation protein NcsA (321 aa).

Residue lysine 204 forms a Glycyl lysine isopeptide (Lys-Gly) (interchain with G-Cter in SAMP2) linkage.

It belongs to the TtcA family. CTU1/NCS6/ATPBD3 subfamily. Interacts with monomeric and polymeric forms of SAMP2. Interacts with UbaA. Interacts with archaeal EF-1-alpha and Pan1. Non-sampylated protein forms a complex with archaeal CPSF1 of approximately 100 kDa. Post-translationally, sampylated at Lys-204 with the archaeal ubiquitin-like protein SAMP2. Polymeric chains of SAMP2 are also linked.

It participates in tRNA modification; 5-methoxycarbonylmethyl-2-thiouridine-tRNA biosynthesis. Functionally, required for thiolation of mcm(5)S(2)U at the wobble uridine position of tRNA specific for lysine (tRNA(Lys)). Probably acts by catalyzing adenylation of tRNA, an intermediate required for 2-thiolation. May also act as a sulfurtransferase that transfers sulfur from thiocarboxylated SAMP2 onto the uridine of tRNA at wobble position. Required for cell growth at elevated temperatures. In Haloferax volcanii (strain ATCC 29605 / DSM 3757 / JCM 8879 / NBRC 14742 / NCIMB 2012 / VKM B-1768 / DS2) (Halobacterium volcanii), this protein is tRNA 2-thiolation protein NcsA.